The chain runs to 598 residues: UvrABC system protein C (598 aa).

Residues 14-91 enclose the GIY-YIG domain; it reads DQPGCYLMKD…IHKNNPKYNI (78 aa). The 36-residue stretch at 196–231 folds into the UVR domain; the sequence is TEIQDRLQEKMAYAAAHMEFEKAAEFRDQIKAIETV.

Belongs to the UvrC family. In terms of assembly, interacts with UvrB in an incision complex.

It is found in the cytoplasm. Functionally, the UvrABC repair system catalyzes the recognition and processing of DNA lesions. UvrC both incises the 5' and 3' sides of the lesion. The N-terminal half is responsible for the 3' incision and the C-terminal half is responsible for the 5' incision. The polypeptide is UvrABC system protein C (Enterococcus faecalis (strain ATCC 700802 / V583)).